The chain runs to 605 residues: UvrABC system protein C (605 aa).

The region spanning 14 to 92 is the GIY-YIG domain; it reads QSCGVYKMVG…IKSLKPLYNI (79 aa). The 36-residue stretch at 202–237 folds into the UVR domain; the sequence is KEVKEQLLFTMRKCSSEENYELAAIYRDRVKFLEQI.

It belongs to the UvrC family. As to quaternary structure, interacts with UvrB in an incision complex.

Its subcellular location is the cytoplasm. The UvrABC repair system catalyzes the recognition and processing of DNA lesions. UvrC both incises the 5' and 3' sides of the lesion. The N-terminal half is responsible for the 3' incision and the C-terminal half is responsible for the 5' incision. The protein is UvrABC system protein C of Wolbachia sp. subsp. Drosophila simulans (strain wRi).